We begin with the raw amino-acid sequence, 696 residues long: UvrABC system protein C (696 aa).

Residues 16-95 (TEPGVYKFRD…IKRFDPRFNV (80 aa)) enclose the GIY-YIG domain. One can recognise a UVR domain in the interval 208-243 (DKVTRKLNADMMAAAEELDFERAARLRDDLEAIDKV).

This sequence belongs to the UvrC family. Interacts with UvrB in an incision complex.

It is found in the cytoplasm. Functionally, the UvrABC repair system catalyzes the recognition and processing of DNA lesions. UvrC both incises the 5' and 3' sides of the lesion. The N-terminal half is responsible for the 3' incision and the C-terminal half is responsible for the 5' incision. This chain is UvrABC system protein C, found in Corynebacterium glutamicum (strain ATCC 13032 / DSM 20300 / JCM 1318 / BCRC 11384 / CCUG 27702 / LMG 3730 / NBRC 12168 / NCIMB 10025 / NRRL B-2784 / 534).